We begin with the raw amino-acid sequence, 596 residues long: Ferredoxin--nitrite reductase, chloroplastic (596 aa).

The N-terminal 28 residues, 1-28, are a transit peptide targeting the chloroplast; the sequence is MASSASLQRFLPPYPHAAASRCRPPGVR. Residues 1–56 are disordered; sequence MASSASLQRFLPPYPHAAASRCRPPGVRARPVQSSTVSAPSSSTPAADEAVSAERL. A compositionally biased stretch (low complexity) spans 31–47; that stretch reads PVQSSTVSAPSSSTPAA. Positions 474, 480, 515, and 519 each coordinate [4Fe-4S] cluster. Cys-519 contacts siroheme.

Belongs to the nitrite and sulfite reductase 4Fe-4S domain family. As to quaternary structure, monomer. The cofactor is siroheme. It depends on [4Fe-4S] cluster as a cofactor.

The protein resides in the plastid. It is found in the chloroplast. It carries out the reaction 6 oxidized [2Fe-2S]-[ferredoxin] + NH4(+) + 2 H2O = nitrite + 6 reduced [2Fe-2S]-[ferredoxin] + 8 H(+). It participates in nitrogen metabolism; nitrate reduction (assimilation). Functionally, catalyzes the six-electron reduction of nitrite to ammonium. This Oryza sativa subsp. japonica (Rice) protein is Ferredoxin--nitrite reductase, chloroplastic.